The chain runs to 296 residues: Acetylglutamate kinase (296 aa).

Substrate-binding positions include 67–68 (GG), arginine 89, and asparagine 194.

It belongs to the acetylglutamate kinase family. ArgB subfamily.

The protein localises to the cytoplasm. The enzyme catalyses N-acetyl-L-glutamate + ATP = N-acetyl-L-glutamyl 5-phosphate + ADP. Its pathway is amino-acid biosynthesis; L-arginine biosynthesis; N(2)-acetyl-L-ornithine from L-glutamate: step 2/4. In terms of biological role, catalyzes the ATP-dependent phosphorylation of N-acetyl-L-glutamate. The sequence is that of Acetylglutamate kinase from Brucella abortus (strain S19).